A 155-amino-acid chain; its full sequence is Transcriptional regulator MraZ (155 aa).

SpoVT-AbrB domains follow at residues 7-54 (TYEC…PMEE) and 83-126 (VKTV…DKDK).

The protein belongs to the MraZ family. Forms oligomers.

Its subcellular location is the cytoplasm. The protein localises to the nucleoid. The sequence is that of Transcriptional regulator MraZ from Christiangramia forsetii (strain DSM 17595 / CGMCC 1.15422 / KT0803) (Gramella forsetii).